The sequence spans 109 residues: MWGLLTVPAPAQARRADSSEFDPDRGWRLHPQVAVRPEPFGALLYHFGTRKLSFLKNRTILAVVQTLADYPDIRSACRGAGVDDCDQDPYLHALSVLAGSNMLVPRQTT.

Belongs to the peptide chaperone MftB family.

In terms of biological role, peptide chaperone involved in the biosynthesis of the enzyme cofactor mycofactocin (MFT). Binds MftA and MftC with high affinity, and is essential for MftC activity on MftA, likely via the formation of a ternary complex. The polypeptide is Peptide chaperone MftB (Mycobacterium tuberculosis (strain ATCC 25618 / H37Rv)).